The sequence spans 376 residues: Adipocyte plasma membrane-associated protein (376 aa).

A helical membrane pass occupies residues 1–17 (MTFLMLAVSLAIPLLGA). A glycan (N-linked (GlcNAc...) asparagine) is linked at N120.

The protein belongs to the strictosidine synthase family.

It localises to the membrane. Its function is as follows. Exhibits strong arylesterase activity with beta-naphthyl acetate and phenyl acetate. May play a role in adipocyte differentiation. The chain is Adipocyte plasma membrane-associated protein (Apmap) from Rattus norvegicus (Rat).